The following is a 517-amino-acid chain: Crotonobetaine/carnitine--CoA ligase (517 aa).

Belongs to the ATP-dependent AMP-binding enzyme family.

It carries out the reaction 4-(trimethylamino)butanoate + ATP + CoA = 4-(trimethylamino)butanoyl-CoA + AMP + diphosphate. The catalysed reaction is crotonobetaine + ATP + CoA = crotonobetainyl-CoA + AMP + diphosphate. The enzyme catalyses (R)-carnitine + ATP + CoA = (R)-carnitinyl-CoA + AMP + diphosphate. It functions in the pathway amine and polyamine metabolism; carnitine metabolism. Catalyzes the transfer of CoA to carnitine, generating the initial carnitinyl-CoA needed for the CaiB reaction cycle. Also has activity toward crotonobetaine and gamma-butyrobetaine. The polypeptide is Crotonobetaine/carnitine--CoA ligase (Salmonella paratyphi B (strain ATCC BAA-1250 / SPB7)).